We begin with the raw amino-acid sequence, 207 residues long: Minor capsid protein P11 (207 aa).

The segment at 7–23 (VKVVAILAVLFLVYKLW) is hydrophobic. The interval 63–82 (ETDAEDDDIYTGETDDMYDG) is disordered.

In terms of assembly, interacts with the major capsid protein.

The protein localises to the virion. Functionally, one of the minor capsid proteins that constitute a network internal to the major capsid proteins and outside the lipid membrane. The minor capsid proteins glue and stabilize the capsomers. the p11 zip protein binds together the neighboring symmetrons. The protein is Minor capsid protein P11 of Paramecium bursaria Chlorella virus 1 (PBCV-1).